Consider the following 136-residue polypeptide: Small ribosomal subunit protein eS12 (136 aa).

The protein belongs to the eukaryotic ribosomal protein eS12 family.

This chain is Small ribosomal subunit protein eS12 (rps12), found in Dictyostelium discoideum (Social amoeba).